Reading from the N-terminus, the 96-residue chain is ATP synthase subunit e, mitochondrial (96 aa).

Serine 2 carries the post-translational modification N-acetylserine.

The protein belongs to the ATPase e subunit family. F-type ATPases have 2 components, CF(1) - the catalytic core - and CF(0) - the membrane proton channel. In yeast, the dimeric form of ATP synthase consists of 17 polypeptides: alpha, beta, gamma, delta, epsilon, 4 (B), 5 (OSCP), 6 (A), 8, 9 (C), d, E (Tim11), f, g, h, i/j and k.

It localises to the mitochondrion. It is found in the mitochondrion inner membrane. Functionally, mitochondrial membrane ATP synthase (F(1)F(0) ATP synthase or Complex V) produces ATP from ADP in the presence of a proton gradient across the membrane which is generated by electron transport complexes of the respiratory chain. F-type ATPases consist of two structural domains, F(1) - containing the extramembraneous catalytic core, and F(0) - containing the membrane proton channel, linked together by a central stalk and a peripheral stalk. During catalysis, ATP synthesis in the catalytic domain of F(1) is coupled via a rotary mechanism of the central stalk subunits to proton translocation. Part of the complex F(0) domain. Minor subunit located with subunit a in the membrane. The chain is ATP synthase subunit e, mitochondrial (TIM11) from Saccharomyces cerevisiae (strain ATCC 204508 / S288c) (Baker's yeast).